A 311-amino-acid polypeptide reads, in one-letter code: 4-diphosphocytidyl-2-C-methyl-D-erythritol kinase (311 aa).

Lys9 is a catalytic residue. 95 to 105 (PLGAGLAGGST) is an ATP binding site. The active site involves Asp137.

It belongs to the GHMP kinase family. IspE subfamily.

The catalysed reaction is 4-CDP-2-C-methyl-D-erythritol + ATP = 4-CDP-2-C-methyl-D-erythritol 2-phosphate + ADP + H(+). Its pathway is isoprenoid biosynthesis; isopentenyl diphosphate biosynthesis via DXP pathway; isopentenyl diphosphate from 1-deoxy-D-xylulose 5-phosphate: step 3/6. In terms of biological role, catalyzes the phosphorylation of the position 2 hydroxy group of 4-diphosphocytidyl-2C-methyl-D-erythritol. The protein is 4-diphosphocytidyl-2-C-methyl-D-erythritol kinase of Thermosynechococcus vestitus (strain NIES-2133 / IAM M-273 / BP-1).